The chain runs to 432 residues: Elongation factor 1-gamma (432 aa).

In terms of domain architecture, GST N-terminal spans 1–82; sequence LYTYPENWRA…YVSNEELRGS (82 aa). Positions 83 to 211 constitute a GST C-terminal domain; sequence TPEAAAQVVQ…VKLCEKMAQF (129 aa). An N6-acetyllysine mark is found at K142 and K207. A compositionally biased stretch (basic and acidic residues) spans 216–249; the sequence is FAESQPKKDTPRKEKGSREEKQKPQAERKEEKKA. The tract at residues 216–258 is disordered; that stretch reads FAESQPKKDTPRKEKGSREEKQKPQAERKEEKKAAAPAPEEEL. Residue K248 forms a Glycyl lysine isopeptide (Lys-Gly) (interchain with G-Cter in SUMO1) linkage. One can recognise an EF-1-gamma C-terminal domain in the interval 271-432; the sequence is AKDPFAHLPK…KAFNQGKIFK (162 aa). K280 is covalently cross-linked (Glycyl lysine isopeptide (Lys-Gly) (interchain with G-Cter in SUMO2)). Residue K396 is modified to N6-acetyllysine. At K429 the chain carries N6-acetyllysine; alternate. K429 is modified (N6-malonyllysine; alternate).

EF-1 is composed of four subunits: alpha, beta, delta, and gamma.

Functionally, probably plays a role in anchoring the complex to other cellular components. This is Elongation factor 1-gamma (EEF1G) from Sus scrofa (Pig).